Reading from the N-terminus, the 334-residue chain is N-acetyl-gamma-glutamyl-phosphate reductase (334 aa).

The active site involves C154.

Belongs to the NAGSA dehydrogenase family. Type 1 subfamily.

The protein resides in the cytoplasm. The enzyme catalyses N-acetyl-L-glutamate 5-semialdehyde + phosphate + NADP(+) = N-acetyl-L-glutamyl 5-phosphate + NADPH + H(+). It participates in amino-acid biosynthesis; L-arginine biosynthesis; N(2)-acetyl-L-ornithine from L-glutamate: step 3/4. Catalyzes the NADPH-dependent reduction of N-acetyl-5-glutamyl phosphate to yield N-acetyl-L-glutamate 5-semialdehyde. In Buchnera aphidicola subsp. Acyrthosiphon pisum (strain 5A), this protein is N-acetyl-gamma-glutamyl-phosphate reductase.